The sequence spans 438 residues: Transmembrane protein 184C (438 aa).

A run of 7 helical transmembrane segments spans residues 17-37, 48-68, 86-106, 179-199, 212-232, 254-274, and 287-307; these read LVAV…VWEL, AWFI…WVIL, ILWM…YPGI, YTVV…LGIY, YLVI…LLFY, VVFV…VGVI, and AVAT…AAIA. The tract at residues 358–438 is disordered; the sequence is PRKKLFPEDQ…KEPSDKSVDS (81 aa). Low complexity-rich tracts occupy residues 374–390 and 404–413; these read SLLS…ASSM and TVTPQTTPTT. Ser422 carries the phosphoserine modification. Positions 425-438 are enriched in basic and acidic residues; the sequence is IGEKKEPSDKSVDS.

This sequence belongs to the TMEM184 family.

It is found in the membrane. Functionally, possible tumor suppressor which may play a role in cell growth. This is Transmembrane protein 184C (TMEM184C) from Pongo abelii (Sumatran orangutan).